The sequence spans 71 residues: Large ribosomal subunit protein bL31 (71 aa).

Positions 16, 18, 37, and 40 each coordinate Zn(2+).

Belongs to the bacterial ribosomal protein bL31 family. Type A subfamily. As to quaternary structure, part of the 50S ribosomal subunit. It depends on Zn(2+) as a cofactor.

Binds the 23S rRNA. This Pseudomonas putida (strain W619) protein is Large ribosomal subunit protein bL31.